The chain runs to 180 residues: Large ribosomal subunit protein uL5 (180 aa).

It belongs to the universal ribosomal protein uL5 family. Part of the 50S ribosomal subunit; part of the 5S rRNA/L5/L18/L25 subcomplex. Contacts the 5S rRNA and the P site tRNA. Forms a bridge to the 30S subunit in the 70S ribosome.

In terms of biological role, this is one of the proteins that bind and probably mediate the attachment of the 5S RNA into the large ribosomal subunit, where it forms part of the central protuberance. In the 70S ribosome it contacts protein S13 of the 30S subunit (bridge B1b), connecting the 2 subunits; this bridge is implicated in subunit movement. Contacts the P site tRNA; the 5S rRNA and some of its associated proteins might help stabilize positioning of ribosome-bound tRNAs. The polypeptide is Large ribosomal subunit protein uL5 (Streptococcus pneumoniae (strain JJA)).